Consider the following 427-residue polypeptide: Serine--tRNA ligase (427 aa).

Residue 231–233 (TAE) participates in L-serine binding. ATP-binding positions include 262 to 264 (RRE) and Val278. An L-serine-binding site is contributed by Glu285. An ATP-binding site is contributed by 349–352 (EVSS). Position 384 (Ser384) interacts with L-serine.

Belongs to the class-II aminoacyl-tRNA synthetase family. Type-1 seryl-tRNA synthetase subfamily. As to quaternary structure, homodimer. The tRNA molecule binds across the dimer.

Its subcellular location is the cytoplasm. The enzyme catalyses tRNA(Ser) + L-serine + ATP = L-seryl-tRNA(Ser) + AMP + diphosphate + H(+). It carries out the reaction tRNA(Sec) + L-serine + ATP = L-seryl-tRNA(Sec) + AMP + diphosphate + H(+). It functions in the pathway aminoacyl-tRNA biosynthesis; selenocysteinyl-tRNA(Sec) biosynthesis; L-seryl-tRNA(Sec) from L-serine and tRNA(Sec): step 1/1. Functionally, catalyzes the attachment of serine to tRNA(Ser). Is also able to aminoacylate tRNA(Sec) with serine, to form the misacylated tRNA L-seryl-tRNA(Sec), which will be further converted into selenocysteinyl-tRNA(Sec). This Chlamydia pneumoniae (Chlamydophila pneumoniae) protein is Serine--tRNA ligase.